A 667-amino-acid chain; its full sequence is Homeobox protein 3 (667 aa).

4 disordered regions span residues 44–108 (FFQP…NSSI), 179–232 (NNNN…TVYN), 249–268 (NNNNLNLTNNNNNKNSVNNN), and 331–418 (STNK…YQKQ). Positions 52–63 (LPPPTNQQPQPQ) are enriched in pro residues. The segment covering 75–96 (CNSSFENSPQQPTSPLLISSQT) has biased composition (polar residues). A compositionally biased stretch (low complexity) spans 97 to 108 (SYPSDLSSNSSI). A compositionally biased stretch (basic residues) spans 334 to 343 (KRMKISHHSH). Positions 344–379 (SLSNNNENSLSQPYFNNNNNNNNENENVYNIVNEQN) are enriched in low complexity. Residues 380-390 (PTFNPNQSNTH) show a composition bias toward polar residues. A coiled-coil region spans residues 386–454 (QSNTHQQQEE…ENENVICSEF (69 aa)). Residues 602 to 664 (EFKSRRILSE…NKRMRDKSNK (63 aa)) constitute a DNA-binding region (homeobox).

Its subcellular location is the nucleus. Putative transcription factor. This Dictyostelium discoideum (Social amoeba) protein is Homeobox protein 3 (hbx3).